Here is an 833-residue protein sequence, read N- to C-terminus: Leucine--tRNA ligase (833 aa).

The short motif at 41-52 (PYPSGAGLHVGH) is the 'HIGH' region element. The 'KMSKS' region motif lies at 610–614 (KMSKS). Lys-613 is an ATP binding site.

Belongs to the class-I aminoacyl-tRNA synthetase family.

The protein resides in the cytoplasm. The catalysed reaction is tRNA(Leu) + L-leucine + ATP = L-leucyl-tRNA(Leu) + AMP + diphosphate. This Streptococcus pneumoniae serotype 4 (strain ATCC BAA-334 / TIGR4) protein is Leucine--tRNA ligase.